A 233-amino-acid chain; its full sequence is uncharacterized protein (233 aa).

The 69-residue stretch at 16–84 (KTLAKQVIER…TRGGTYFNDK (69 aa)) folds into the HTH gntR-type domain. Positions 44–63 (EMELMDILHVSRPVLREALS) form a DNA-binding region, H-T-H motif.

This is an uncharacterized protein from Bacillus subtilis (strain 168).